Here is a 483-residue protein sequence, read N- to C-terminus: Glucose-1-phosphate adenylyltransferase large subunit 3, chloroplastic/amyloplastic (483 aa).

The protein belongs to the bacterial/plant glucose-1-phosphate adenylyltransferase family. Heterotetramer. As to expression, tubers.

Its subcellular location is the plastid. It is found in the chloroplast. It localises to the amyloplast. The catalysed reaction is alpha-D-glucose 1-phosphate + ATP + H(+) = ADP-alpha-D-glucose + diphosphate. It participates in glycan biosynthesis; starch biosynthesis. Its activity is regulated as follows. Activated by 3'phosphoglycerate, inhibited by orthophosphate. Allosteric regulation. Functionally, this protein plays a role in synthesis of starch. It catalyzes the synthesis of the activated glycosyl donor, ADP-glucose from Glc-1-P and ATP. This Solanum tuberosum (Potato) protein is Glucose-1-phosphate adenylyltransferase large subunit 3, chloroplastic/amyloplastic (AGPS3).